We begin with the raw amino-acid sequence, 78 residues long: Acyl carrier protein (78 aa).

Positions 2 to 77 (QNIEKKIKKI…SIFDIIKKYV (76 aa)) constitute a Carrier domain. An O-(pantetheine 4'-phosphoryl)serine modification is found at Ser37.

The protein belongs to the acyl carrier protein (ACP) family. In terms of processing, 4'-phosphopantetheine is transferred from CoA to a specific serine of apo-ACP by AcpS. This modification is essential for activity because fatty acids are bound in thioester linkage to the sulfhydryl of the prosthetic group.

It is found in the cytoplasm. It functions in the pathway lipid metabolism; fatty acid biosynthesis. In terms of biological role, carrier of the growing fatty acid chain in fatty acid biosynthesis. This Buchnera aphidicola subsp. Baizongia pistaciae (strain Bp) protein is Acyl carrier protein.